The sequence spans 343 residues: MDRIIDSAATREDEAIEVSIRPKRLADYLGQQPVREQMDIYIQATKARAEALDHVLIFGPPGLGKTTLSHVIAYELGVKLRVTSGPVIEKAGDLAALLTNLQPYDVLFIDEIHRLSPVVEEVLYPAMEDFQIDIMIGEGPAARSIKIDLPPFTLIGATTRTGLLTAPLRDRFGIVQRLEFYSPEDLARIVRRSAGILNIDCTTEGAAEIAQRARGTPRIANRLLRRVRDYAEVKADGQITIEVAQAAMQMLKVDQGGFDELDRRLLHTIVEYFDGGPVGIESLAASLSEERGTLEDVVEPYLIQQGFLVRTARGRMATDKAYQHLALQPRERVSAFTDPEDLF.

The tract at residues Met-1–Tyr-181 is large ATPase domain (RuvB-L). ATP contacts are provided by residues Ile-20, Arg-21, Gly-62, Lys-65, Thr-66, Thr-67, Glu-128–Phe-130, Arg-171, Tyr-181, and Arg-218. Residue Thr-66 coordinates Mg(2+). The segment at Ser-182–Lys-252 is small ATPAse domain (RuvB-S). The tract at residues Gln-255–Phe-343 is head domain (RuvB-H). DNA is bound by residues Arg-291, Arg-310, and Arg-315.

This sequence belongs to the RuvB family. Homohexamer. Forms an RuvA(8)-RuvB(12)-Holliday junction (HJ) complex. HJ DNA is sandwiched between 2 RuvA tetramers; dsDNA enters through RuvA and exits via RuvB. An RuvB hexamer assembles on each DNA strand where it exits the tetramer. Each RuvB hexamer is contacted by two RuvA subunits (via domain III) on 2 adjacent RuvB subunits; this complex drives branch migration. In the full resolvosome a probable DNA-RuvA(4)-RuvB(12)-RuvC(2) complex forms which resolves the HJ.

It localises to the cytoplasm. The enzyme catalyses ATP + H2O = ADP + phosphate + H(+). Functionally, the RuvA-RuvB-RuvC complex processes Holliday junction (HJ) DNA during genetic recombination and DNA repair, while the RuvA-RuvB complex plays an important role in the rescue of blocked DNA replication forks via replication fork reversal (RFR). RuvA specifically binds to HJ cruciform DNA, conferring on it an open structure. The RuvB hexamer acts as an ATP-dependent pump, pulling dsDNA into and through the RuvAB complex. RuvB forms 2 homohexamers on either side of HJ DNA bound by 1 or 2 RuvA tetramers; 4 subunits per hexamer contact DNA at a time. Coordinated motions by a converter formed by DNA-disengaged RuvB subunits stimulates ATP hydrolysis and nucleotide exchange. Immobilization of the converter enables RuvB to convert the ATP-contained energy into a lever motion, pulling 2 nucleotides of DNA out of the RuvA tetramer per ATP hydrolyzed, thus driving DNA branch migration. The RuvB motors rotate together with the DNA substrate, which together with the progressing nucleotide cycle form the mechanistic basis for DNA recombination by continuous HJ branch migration. Branch migration allows RuvC to scan DNA until it finds its consensus sequence, where it cleaves and resolves cruciform DNA. This chain is Holliday junction branch migration complex subunit RuvB, found in Xylella fastidiosa (strain Temecula1 / ATCC 700964).